Here is a 1110-residue protein sequence, read N- to C-terminus: RNA2 polyprotein (1110 aa).

This sequence belongs to the nepoviruses RNA2 polyprotein family. Specific enzymatic cleavages in vivo by the P1 encoded 3C-like protease yield mature proteins.

It is found in the host cell junction. Its subcellular location is the host plasmodesma. The protein resides in the host cytoplasm. The protein localises to the host nucleus. It localises to the virion. Implicated in RNA2 replication. Could also be required for nematode transmission of the virus. Functionally, transports viral genome to neighboring plant cells directly through plasmosdesmata, without any budding. The movement protein allows efficient cell to cell propagation, by bypassing the host cell wall barrier. Acts by forming a tubular structure at the host plasmodesmata, enlarging it enough to allow free passage of virion capsids. In Vitis vinifera (Grape), this protein is RNA2 polyprotein.